We begin with the raw amino-acid sequence, 166 residues long: MSKAIIAKKEKLVDDFAAELKEAKAILVIDYLGLTVEEVTNLRKDLRDANVKMKVIKNTYLKRAAEKAGIEGLEDTFVGPTAVVYTADAEDITEPARIVSKYEDDIDALSIKGGMLEGKVASQEEIKKLAAIPGREGLLSMLVSVLQAPVRNFAYAVKAVADSKDE.

It belongs to the universal ribosomal protein uL10 family. In terms of assembly, part of the ribosomal stalk of the 50S ribosomal subunit. The N-terminus interacts with L11 and the large rRNA to form the base of the stalk. The C-terminus forms an elongated spine to which L12 dimers bind in a sequential fashion forming a multimeric L10(L12)X complex.

In terms of biological role, forms part of the ribosomal stalk, playing a central role in the interaction of the ribosome with GTP-bound translation factors. The protein is Large ribosomal subunit protein uL10 of Lactobacillus johnsonii (strain CNCM I-12250 / La1 / NCC 533).